The sequence spans 595 residues: Quinoprotein alcohol dehydrogenase PedH (595 aa).

A signal peptide spans 1–27; it reads MTRSPRRPLFAVSLVLSAMLLAGAAHA. Q87 contributes to the pyrroloquinoline quinone binding site. A disulfide bond links C131 and C132. R137, S181, G197, and G198 together coordinate pyrroloquinoline quinone. Pr(3+) is bound at residue E199. W263 serves as a coordination point for pyrroloquinoline quinone. Residues N281, D323, and D325 each coordinate Pr(3+). The active-site Proton acceptor is the D323. R350, N417, W493, and A557 together coordinate pyrroloquinoline quinone.

It belongs to the bacterial PQQ dehydrogenase family. Requires Pr(3+) as cofactor. The cofactor is Nd(3+). It depends on La(3+) as a cofactor. Ce(3+) serves as cofactor. Sm(3+) is required as a cofactor. Requires pyrroloquinoline quinone as cofactor. Post-translationally, the disulfide ring formed between the two adjacent cysteine residues Cys-131 and Cys-132 is essential for efficient electron transfer at pH 7 from PedH to its natural electron acceptor cytochrome c550.

It is found in the periplasm. It carries out the reaction a primary alcohol + 2 Fe(III)-[cytochrome c] = an aldehyde + 2 Fe(II)-[cytochrome c] + 2 H(+). It catalyses the reaction ethanol + 2 Fe(III)-[cytochrome c] = acetaldehyde + 2 Fe(II)-[cytochrome c] + 2 H(+). The catalysed reaction is butan-1-ol + 2 Fe(III)-[cytochrome c] = butanal + 2 Fe(II)-[cytochrome c] + 2 H(+). The enzyme catalyses butan-2-ol + 2 Fe(III)-[cytochrome c] = butan-2-one + 2 Fe(II)-[cytochrome c] + 2 H(+). It carries out the reaction 2-phenylethanol + 2 Fe(III)-[cytochrome c] = 2-phenylacetaldehyde + 2 Fe(II)-[cytochrome c] + 2 H(+). It catalyses the reaction octan-1-ol + 2 Fe(III)-[cytochrome c] = octanal + 2 Fe(II)-[cytochrome c] + 2 H(+). The catalysed reaction is hexan-1-ol + 2 Fe(III)-[cytochrome c] = hexanal + 2 Fe(II)-[cytochrome c] + 2 H(+). The enzyme catalyses cinnamyl alcohol + 2 Fe(III)-[cytochrome c] = cinnamaldehyde + 2 Fe(II)-[cytochrome c] + 2 H(+). It carries out the reaction farnesol + 2 Fe(III)-[cytochrome c] = farnesal + 2 Fe(II)-[cytochrome c] + 2 H(+). It catalyses the reaction an aldehyde + 2 Fe(III)-[cytochrome c] + H2O = a carboxylate + 2 Fe(II)-[cytochrome c] + 3 H(+). The catalysed reaction is acetaldehyde + 2 Fe(III)-[cytochrome c] + H2O = 2 Fe(II)-[cytochrome c] + acetate + 3 H(+). The enzyme catalyses butanal + 2 Fe(III)-[cytochrome c] + H2O = butanoate + 2 Fe(II)-[cytochrome c] + 3 H(+). It carries out the reaction hexanal + 2 Fe(III)-[cytochrome c] + H2O = hexanoate + 2 Fe(II)-[cytochrome c] + 3 H(+). It catalyses the reaction octanal + 2 Fe(III)-[cytochrome c] + H2O = octanoate + 2 Fe(II)-[cytochrome c] + 3 H(+). In terms of biological role, alcohol dehydrogenase that catalyzes the oxidation of a range of substrates, including linear and aromatic primary and secondary alcohols, as well as aldehydes, but only in the presence of lanthanides, allowing bacterial growth with a variety of volatile organic compounds (VOCs) as carbon and energy sources. Is also involved in the transcriptional regulation of pedE and pedH, most likely acting as a lanthanide sensory module. Uses a specific inducible cytochrome c550, encoded by the adjacent gene in the locus, as electron acceptor. The sequence is that of Quinoprotein alcohol dehydrogenase PedH from Pseudomonas putida (strain ATCC 47054 / DSM 6125 / CFBP 8728 / NCIMB 11950 / KT2440).